We begin with the raw amino-acid sequence, 78 residues long: Large ribosomal subunit protein eL20 (78 aa).

The protein belongs to the eukaryotic ribosomal protein eL20 family. Part of the 50S ribosomal subunit. Binds 23S rRNA.

In Pyrobaculum islandicum (strain DSM 4184 / JCM 9189 / GEO3), this protein is Large ribosomal subunit protein eL20.